A 1029-amino-acid polypeptide reads, in one-letter code: Protein STABILIZED1 (1029 aa).

One can recognise a Ubiquitin-like domain in the interval methionine 1–glycine 85. A Glycyl lysine isopeptide (Gly-Lys) (interchain with K-? in acceptor proteins) cross-link involves residue glycine 85. The disordered stretch occupies residues alanine 142–aspartate 170. The stretch at aspartate 210–lysine 243 forms a coiled coil. 15 HAT repeats span residues tyrosine 367 to valine 399, glycine 401 to alanine 431, asparagine 432 to histidine 462, aspartate 463 to glutamate 494, aspartate 496 to tyrosine 524, glutamate 526 to alanine 554, glycine 639 to serine 671, glycine 673 to leucine 705, glycine 707 to glutamate 739, lysine 741 to glutamate 772, glycine 774 to arginine 806, lysine 808 to lysine 840, asparagine 842 to arginine 874, aspartate 876 to arginine 908, and lysine 940 to glutamine 972. One copy of the TPR 1 repeat lies at lysine 625–lysine 658. The stretch at phenylalanine 794–cysteine 827 is one TPR 2 repeat. The TPR 3 repeat unit spans residues proline 926–isoleucine 959.

As to quaternary structure, component of a pre-mRNA splicing complex. Interacts with ZOP1. Interacts with PRP31. Ubiquitous.

It localises to the nucleus. The protein resides in the cajal body. Pre-mRNA splicing factor required for splicing and for the turnover of unstable transcripts. May be a U5 snRNP-associated protein involved in the formation of U4/U6-U5 tri-snRNP. Involved in responses to abiotic stresses. Involved in microRNAs (miRNAs) biogenesis by functioning in primary miRNAs (pri-miRNAs) splicing. Required for DNA methylation and transcriptional silencing through the RNA-directed DNA methylation (RdDM) pathway. The polypeptide is Protein STABILIZED1 (STA1) (Arabidopsis thaliana (Mouse-ear cress)).